Here is a 492-residue protein sequence, read N- to C-terminus: MYRYSALELAKAVTLGELTATGVTQHFFHRIEEAEGQVGAFISLCKEQALEQAELIDKKRSRGEPLGKLAGVPVGIKDNIHVTGLKTTCASRVLENYQPPFDATVVERIKKEDGIILGKLNMDEFAMGSTTLYSAFHPTHNPWDLSRVPGGSSGGSAAAVSARFCPVALGSDTGGSIRQPAAFCGVVGFKPSYGAVSRYGLVAFASSLDQIGPLANTVEDVALMMDVFSGRDPKDATSREFFRDSFMSKLSTEVPKVIGVPRTFLEGLRDDIRENFFSSLAIFEGEGTHLVDVELDILSHAVSIYYILASAEAATNLARFDGVRYGYRSPQAHTISQLYDLSRGEGFGKEVMRRILLGNYVLSAERQNVYYKKATAVRAKIVKAFRTAFEKCEILAMPVCSSPAFEIGEILDPVTLYLQDIYTVAMNLAYLPAIAVPSGFSKEGLPLGLQIIGQQGQDQQVCQVGYSFQEHAQIKQLFSKRYAKSVVLGGQS.

Residues lysine 77 and serine 152 each act as charge relay system in the active site. Residue serine 176 is the Acyl-ester intermediate of the active site.

Belongs to the amidase family. GatA subfamily. Heterotrimer of A, B and C subunits.

It carries out the reaction L-glutamyl-tRNA(Gln) + L-glutamine + ATP + H2O = L-glutaminyl-tRNA(Gln) + L-glutamate + ADP + phosphate + H(+). In terms of biological role, allows the formation of correctly charged Gln-tRNA(Gln) through the transamidation of misacylated Glu-tRNA(Gln) in organisms which lack glutaminyl-tRNA synthetase. The reaction takes place in the presence of glutamine and ATP through an activated gamma-phospho-Glu-tRNA(Gln). The sequence is that of Glutamyl-tRNA(Gln) amidotransferase subunit A (gatA) from Chlamydia pneumoniae (Chlamydophila pneumoniae).